The primary structure comprises 72 residues: Translation initiation factor IF-1 (72 aa).

The 72-residue stretch at 1-72 (MAKEEVLEFP…TKGRITYRFK (72 aa)) folds into the S1-like domain.

It belongs to the IF-1 family. Component of the 30S ribosomal translation pre-initiation complex which assembles on the 30S ribosome in the order IF-2 and IF-3, IF-1 and N-formylmethionyl-tRNA(fMet); mRNA recruitment can occur at any time during PIC assembly.

The protein resides in the cytoplasm. In terms of biological role, one of the essential components for the initiation of protein synthesis. Stabilizes the binding of IF-2 and IF-3 on the 30S subunit to which N-formylmethionyl-tRNA(fMet) subsequently binds. Helps modulate mRNA selection, yielding the 30S pre-initiation complex (PIC). Upon addition of the 50S ribosomal subunit IF-1, IF-2 and IF-3 are released leaving the mature 70S translation initiation complex. This Brucella abortus (strain 2308) protein is Translation initiation factor IF-1.